The chain runs to 310 residues: Tagatose-6-phosphate kinase (310 aa).

The protein belongs to the carbohydrate kinase PfkB family. LacC subfamily.

It carries out the reaction D-tagatofuranose 6-phosphate + ATP = D-tagatofuranose 1,6-bisphosphate + ADP + H(+). Its pathway is carbohydrate metabolism; D-tagatose 6-phosphate degradation; D-glyceraldehyde 3-phosphate and glycerone phosphate from D-tagatose 6-phosphate: step 1/2. The chain is Tagatose-6-phosphate kinase from Staphylococcus aureus (strain bovine RF122 / ET3-1).